Reading from the N-terminus, the 122-residue chain is Lysozyme (122 aa).

The 116-residue stretch at 3 to 118 folds into the I-type lysozyme domain; sequence GGIVSQRCLS…WNRLQKISGC (116 aa). 7 disulfides stabilise this stretch: Cys10–Cys86, Cys13–Cys118, Cys15–Cys21, Cys26–Cys35, Cys48–Cys68, Cys58–Cys64, and Cys82–Cys100. The active-site Proton donor is the Glu18. The active-site Nucleophile is Asp29. Substrate is bound at residue 41 to 47; it reads KEAYWID. Residues Tyr72, His93, 93 to 95, and Lys102 contribute to the substrate site; that span reads HNG.

The protein belongs to the glycosyl hydrolase 22 family. Type-I lysozyme subfamily. Monomer.

The protein resides in the secreted. It carries out the reaction Hydrolysis of (1-&gt;4)-beta-linkages between N-acetylmuramic acid and N-acetyl-D-glucosamine residues in a peptidoglycan and between N-acetyl-D-glucosamine residues in chitodextrins.. In terms of biological role, has bacteriolytic activity against Gram-positive bacteria M.luteus. Also has chitinase activity. The protein is Lysozyme of Meretrix lusoria (Hard clam).